A 620-amino-acid chain; its full sequence is MSTTNTAAASQDACYISLLGLAEYFRTSQPPNVKKCIQCLQALFTFTPPSKVEARTHLQMGQILMAYTKNIDMARQHLEKAWNIAEPLMNFDDVKFDTASVLAQLHLQTDQSSHTAKAMLRRAVELSQHNVYWHCKLLLQLSQIHASDREYSLASELLAVGAESAEEAGATYLKVLFLLSRAMILMIERKTNDVLALLNTAGQIIDNNIPNPHQKEYLKVFFLVLQVCYYLALGQVKTVKPSLKQLQMSIQTIMAPNWPTDEAIFGANQLEMFVWLPKEQLYVLVYLVTVSHSMMAGYMDKAQKYTEKALTQIEKLKMQEDKPILSVFKVILLEHIVMCRMVMGNRELAIREIAAARDVCLAVPHRSLLKRHSAQLHCLIGLYSMSTSFFEHAERQFLVCVNETTERDLKLFANLNLAIIYLRTKRDADLKQILDAVSTENTHTYSSQALMGGFYYVQGLHAFHKNSFHEAKRFLRETLKMANAEDLNRLTSCSLVLLSHVFLSIGNSKESMNMVTPAMQLASKIPDIHVQLWGSAILKDLHRMSKDAQHEKDAYANHVKYSENLIADQRKCVQSAHHELVNWFQGDPPVTSGAAALILSEIPTTSALQPTTGQQFGQFY.

2 TPR repeats span residues 452-485 and 492-525; these read GGFY…ANAE and SCSL…ASKI.

Belongs to the SCC4/mau-2 family. Interacts with Nipped-B to form the cohesin loading complex.

It is found in the nucleus. The protein localises to the nucleoplasm. Functionally, required for association of the cohesin complex with chromatin during interphase. Plays a role in sister chromatid cohesion and normal progression through prometaphase. In Drosophila persimilis (Fruit fly), this protein is MAU2 chromatid cohesion factor homolog.